Reading from the N-terminus, the 70-residue chain is Dermaseptin-H3 (70 aa).

Residues 1 to 22 (MAFLKKSLFLVLFLGMVSLSIC) form the signal peptide. Positions 23 to 43 (EEEKRENEDEELQEDDEQSEM) are excised as a propeptide. Positions 25 to 44 (EKRENEDEELQEDDEQSEMK) are disordered. Acidic residues predominate over residues 30–40 (EDEELQEDDEQ). At L70 the chain carries Leucine amide.

Expressed by the skin glands.

The protein resides in the secreted. Has antibacterial activity against the Gram-negative bacteria E.coli and P.aeruginosa, and the Gram-positive bacteria S.aureus and M.luteus. Has antiprotozoal activity against L.amazonensis. No hemolytic activity. This Pithecopus hypochondrialis (Orange-legged leaf frog) protein is Dermaseptin-H3.